Consider the following 407-residue polypeptide: Na(+)-translocating NADH-quinone reductase subunit F (407 aa).

Residues 3–23 (IILGVVMFTLIVLALVLVILF) form a helical membrane-spanning segment. A 2Fe-2S ferredoxin-type domain is found at 32 to 126 (GDITISINGD…DMDIELPEEI (95 aa)). [2Fe-2S] cluster-binding residues include Cys69, Cys75, Cys78, and Cys110. Residues 129-269 (VKKWECTVIS…SGPFGEFFAK (141 aa)) form the FAD-binding FR-type domain. Residues 272–389 (DAEMVFIGGG…PMMNAAVIGM (118 aa)) form a catalytic region.

It belongs to the NqrF family. Composed of six subunits; NqrA, NqrB, NqrC, NqrD, NqrE and NqrF. [2Fe-2S] cluster is required as a cofactor. FAD serves as cofactor.

The protein resides in the cell inner membrane. It catalyses the reaction a ubiquinone + n Na(+)(in) + NADH + H(+) = a ubiquinol + n Na(+)(out) + NAD(+). Functionally, NQR complex catalyzes the reduction of ubiquinone-1 to ubiquinol by two successive reactions, coupled with the transport of Na(+) ions from the cytoplasm to the periplasm. The first step is catalyzed by NqrF, which accepts electrons from NADH and reduces ubiquinone-1 to ubisemiquinone by a one-electron transfer pathway. The sequence is that of Na(+)-translocating NADH-quinone reductase subunit F from Vibrio vulnificus (strain CMCP6).